The primary structure comprises 369 residues: Methionine import ATP-binding protein MetN 1 (369 aa).

The segment at 1 to 26 (MTTMTVPPSLLPLEPFPTAPDTRAST) is disordered. The ABC transporter domain maps to 29-265 (IRLHGLGKRY…PRHAVTRSLL (237 aa)). 62-69 (GRSGAGKS) is an ATP binding site.

This sequence belongs to the ABC transporter superfamily. Methionine importer (TC 3.A.1.24) family. In terms of assembly, the complex is composed of two ATP-binding proteins (MetN), two transmembrane proteins (MetI) and a solute-binding protein (MetQ).

The protein resides in the cell inner membrane. It carries out the reaction L-methionine(out) + ATP + H2O = L-methionine(in) + ADP + phosphate + H(+). The catalysed reaction is D-methionine(out) + ATP + H2O = D-methionine(in) + ADP + phosphate + H(+). In terms of biological role, part of the ABC transporter complex MetNIQ involved in methionine import. Responsible for energy coupling to the transport system. This chain is Methionine import ATP-binding protein MetN 1, found in Pseudomonas aeruginosa (strain UCBPP-PA14).